Here is a 290-residue protein sequence, read N- to C-terminus: Glycine--tRNA ligase alpha subunit (290 aa).

Belongs to the class-II aminoacyl-tRNA synthetase family. In terms of assembly, tetramer of two alpha and two beta subunits.

Its subcellular location is the cytoplasm. The enzyme catalyses tRNA(Gly) + glycine + ATP = glycyl-tRNA(Gly) + AMP + diphosphate. The polypeptide is Glycine--tRNA ligase alpha subunit (Prochlorococcus marinus (strain NATL2A)).